A 136-amino-acid chain; its full sequence is Class I hydrophobin 16 (136 aa).

The signal sequence occupies residues 1–19; the sequence is MKFTSVIALVATAATLVGA. Cystine bridges form between cysteine 58–cysteine 115, cysteine 65–cysteine 109, cysteine 66–cysteine 99, and cysteine 116–cysteine 129. N-linked (GlcNAc...) asparagine glycosylation is present at asparagine 74.

Belongs to the fungal hydrophobin family. As to quaternary structure, self-assembles to form functional amyloid fibrils called rodlets. Self-assembly into fibrillar rodlets occurs spontaneously at hydrophobic:hydrophilic interfaces and the rodlets further associate laterally to form amphipathic monolayers.

The protein localises to the secreted. It is found in the cell wall. Aerial growth, conidiation, and dispersal of filamentous fungi in the environment rely upon a capability of their secreting small amphipathic proteins called hydrophobins (HPBs) with low sequence identity. Class I can self-assemble into an outermost layer of rodlet bundles on aerial cell surfaces, conferring cellular hydrophobicity that supports fungal growth, development and dispersal; whereas Class II form highly ordered films at water-air interfaces through intermolecular interactions but contribute nothing to the rodlet structure. Hydph16 is a class I hydrophobin that has specific functions in aerial mycelium formation, cell wall stress protection, and cell wall structure formation, but does not seem to be involved in mycelial hydrophobicity. Specifically functions in resisting cell wall synthesis inhibitors. This Pleurotus ostreatus (strain PC15) (Oyster mushroom) protein is Class I hydrophobin 16.